Here is a 92-residue protein sequence, read N- to C-terminus: Large ribosomal subunit protein bL25 (92 aa).

This sequence belongs to the bacterial ribosomal protein bL25 family. Part of the 50S ribosomal subunit; part of the 5S rRNA/L5/L18/L25 subcomplex. Contacts the 5S rRNA. Binds to the 5S rRNA independently of L5 and L18.

Functionally, this is one of the proteins that binds to the 5S RNA in the ribosome where it forms part of the central protuberance. This is Large ribosomal subunit protein bL25 from Photobacterium damsela subsp. piscicida (Pasteurella piscicida).